A 344-amino-acid chain; its full sequence is Phenylalanine--tRNA ligase alpha subunit (344 aa).

E261 lines the Mg(2+) pocket.

Belongs to the class-II aminoacyl-tRNA synthetase family. Phe-tRNA synthetase alpha subunit type 1 subfamily. In terms of assembly, tetramer of two alpha and two beta subunits. The cofactor is Mg(2+).

Its subcellular location is the cytoplasm. It carries out the reaction tRNA(Phe) + L-phenylalanine + ATP = L-phenylalanyl-tRNA(Phe) + AMP + diphosphate + H(+). The sequence is that of Phenylalanine--tRNA ligase alpha subunit from Ehrlichia ruminantium (strain Gardel).